We begin with the raw amino-acid sequence, 802 residues long: Peptidyl serine alpha-galactosyltransferase (802 aa).

The N-terminal stretch at 1-19 (MRWDLITAIVAALVVSVLA) is a signal peptide. At 20-750 (DESGQMAPYR…SEGRFSTLKL (731 aa)) the chain is on the extracellular side. N-linked (GlcNAc...) asparagine glycosylation is found at N214, N275, N425, and N637. The segment at 699–741 (RNCPEPGSESTEKISVSRKVGNIETKQTQGSDETKESSGSSES) is disordered. Residues 751 to 771 (WVIALWLISGVGFLVVMLLVF) traverse the membrane as a helical segment. Residues 772 to 802 (STRRGRGTTRGKGYRNKRRTSYSNTGFLDTK) are Cytoplasmic-facing. Over residues 777–791 (RGTTRGKGYRNKRRT) the composition is skewed to basic residues. The interval 777-802 (RGTTRGKGYRNKRRTSYSNTGFLDTK) is disordered. Residues 792-802 (SYSNTGFLDTK) show a composition bias toward polar residues.

The protein resides in the endoplasmic reticulum membrane. Functionally, glycosyltransferase involved in the O-galactosylation of several proteins including extensins. Catalyzes the transfer of alpha-galactosyl to Ser residues. Hydroxylation of proline residues adjacent to the serine acceptor is required for activity. The protein is Peptidyl serine alpha-galactosyltransferase of Arabidopsis thaliana (Mouse-ear cress).